The chain runs to 565 residues: NAD-dependent malic enzyme (565 aa).

The Proton donor role is filled by Tyr-104. NAD(+) is bound at residue Arg-157. The active-site Proton acceptor is the Lys-175. Glu-246, Asp-247, and Asp-270 together coordinate a divalent metal cation. Positions 270 and 418 each coordinate NAD(+).

It belongs to the malic enzymes family. In terms of assembly, homotetramer. Requires Mg(2+) as cofactor. It depends on Mn(2+) as a cofactor.

It catalyses the reaction (S)-malate + NAD(+) = pyruvate + CO2 + NADH. The enzyme catalyses oxaloacetate + H(+) = pyruvate + CO2. This Salmonella choleraesuis (strain SC-B67) protein is NAD-dependent malic enzyme.